The sequence spans 370 residues: Peptide chain release factor 2 (370 aa).

Position 252 is an N5-methylglutamine (Gln252).

It belongs to the prokaryotic/mitochondrial release factor family. Post-translationally, methylated by PrmC. Methylation increases the termination efficiency of RF2.

Its subcellular location is the cytoplasm. Functionally, peptide chain release factor 2 directs the termination of translation in response to the peptide chain termination codons UGA and UAA. The chain is Peptide chain release factor 2 from Mycobacterium avium (strain 104).